The following is a 289-amino-acid chain: Fatty acid elongase 3-like (289 aa).

Transmembrane regions (helical) follow at residues 35–55 (SFLF…HILL), 75–95 (SLLM…SAAA), 129–149 (VFFW…RTIF), 157–176 (LAVS…FLWL), 181–203 (SYQI…YRFW), 205–225 (GFGL…LVLV), and 248–268 (IGAW…FLNF).

The protein belongs to the ELO family.

It is found in the membrane. In terms of biological role, probable very long-chain fatty acid (VLCFA) elongase that controls VLCFA composition and functions to inhibit abscisic acid (ABA)-mediated stress responses, including regulation of stomatal aperture, maintenance of primary root growth and inhibition of germination. VLCFA pathway and products may function as signaling components acting upstream of sphingosine-1-phosphate, ceramide and the heterotrimeric G-protein complex, in lipid-mediated regulation of abiotic stress signaling. The polypeptide is Fatty acid elongase 3-like (HOS3) (Arabidopsis thaliana (Mouse-ear cress)).